The sequence spans 202 residues: dTTP/UTP pyrophosphatase (202 aa).

The active-site Proton acceptor is D76.

It belongs to the Maf family. YhdE subfamily. A divalent metal cation serves as cofactor.

Its subcellular location is the cytoplasm. The enzyme catalyses dTTP + H2O = dTMP + diphosphate + H(+). It catalyses the reaction UTP + H2O = UMP + diphosphate + H(+). Nucleoside triphosphate pyrophosphatase that hydrolyzes dTTP and UTP. May have a dual role in cell division arrest and in preventing the incorporation of modified nucleotides into cellular nucleic acids. In Neisseria gonorrhoeae (strain ATCC 700825 / FA 1090), this protein is dTTP/UTP pyrophosphatase.